The following is a 121-amino-acid chain: uncharacterized protein (121 aa).

The next 2 membrane-spanning stretches (helical) occupy residues 26–46 (FIAL…ILVL) and 72–92 (AFLT…WLGL).

It is found in the membrane. This is an uncharacterized protein from Saccharomyces cerevisiae (strain ATCC 204508 / S288c) (Baker's yeast).